The chain runs to 245 residues: MYRYKITIEYLGTNLAGWQRQAGVMSVQQILEEAIYKFSGEQVILFGSGRTDAGVHAIGQVAHFDLSKYLEPHKIITAINYFARPYAVVVWHCAIVLNDFHARFSATSRHYIYRIINRPYPSVIDLNRAWWISSPLDVLAMQKAAAYLLGKHDFTSFRASSCQSKSPIKTLTELNIVKGDEEIKLYLSAPSFLHHMVRNIVGSLVLVGKNIWQAEHIKDVLEAKDRKAAGLTAPAYGLYFVKTEY.

D52 (nucleophile) is an active-site residue. Position 111 (Y111) interacts with substrate.

Belongs to the tRNA pseudouridine synthase TruA family. In terms of assembly, homodimer.

The catalysed reaction is uridine(38/39/40) in tRNA = pseudouridine(38/39/40) in tRNA. In terms of biological role, formation of pseudouridine at positions 38, 39 and 40 in the anticodon stem and loop of transfer RNAs. The sequence is that of tRNA pseudouridine synthase A from Rickettsia akari (strain Hartford).